The sequence spans 142 residues: Hemoglobin subunit alpha-A (142 aa).

In terms of domain architecture, Globin spans 2-142 (VLSAADKTNV…VGAVLTAKYR (141 aa)). O2 is bound at residue His59. His88 serves as a coordination point for heme b.

This sequence belongs to the globin family. Heterotetramer of two alpha chains and two beta chains. Red blood cells.

Functionally, involved in oxygen transport from the lung to the various peripheral tissues. The protein is Hemoglobin subunit alpha-A (HBAA) of Mareca penelope (Eurasian wigeon).